A 104-amino-acid polypeptide reads, in one-letter code: Cysteine-rich and transmembrane domain-containing protein 1 (104 aa).

Composition is skewed to pro residues over residues 1-25 and 33-47; these read MNPENPPPYPGPGPTAPYPPYPQQP and GAPPPQGYPYPPPQG. The tract at residues 1 to 47 is disordered; sequence MNPENPPPYPGPGPTAPYPPYPQQPMGPMGPMGAPPPQGYPYPPPQG. The chain crosses the membrane as a helical span at residues 81–98; it reads LGPSTCLTACWTALCCCC.

Belongs to the CYSTM1 family.

The protein resides in the membrane. The protein is Cysteine-rich and transmembrane domain-containing protein 1 (Cystm1) of Mus musculus (Mouse).